A 273-amino-acid chain; its full sequence is Large ribosomal subunit protein uL2 (273 aa).

2 disordered regions span residues 28 to 53 (KPFA…TTRH) and 221 to 273 (RGTA…RRSK). Over residues 39–48 (KSGGRNNNGR) the composition is skewed to low complexity.

It belongs to the universal ribosomal protein uL2 family. In terms of assembly, part of the 50S ribosomal subunit. Forms a bridge to the 30S subunit in the 70S ribosome.

In terms of biological role, one of the primary rRNA binding proteins. Required for association of the 30S and 50S subunits to form the 70S ribosome, for tRNA binding and peptide bond formation. It has been suggested to have peptidyltransferase activity; this is somewhat controversial. Makes several contacts with the 16S rRNA in the 70S ribosome. This is Large ribosomal subunit protein uL2 from Klebsiella pneumoniae (strain 342).